Reading from the N-terminus, the 116-residue chain is Iron-sulfur cluster insertion protein ErpA (116 aa).

The iron-sulfur cluster site is built by Cys44, Cys108, and Cys110.

It belongs to the HesB/IscA family. Homodimer. It depends on iron-sulfur cluster as a cofactor.

In terms of biological role, required for insertion of 4Fe-4S clusters for at least IspG. This chain is Iron-sulfur cluster insertion protein ErpA, found in Pseudomonas aeruginosa (strain LESB58).